The chain runs to 273 residues: Dermonecrotic toxin LdSicTox-alphaIB3aii (273 aa).

Histidine 5 is an active-site residue. Residues glutamate 25 and aspartate 27 each coordinate Mg(2+). Catalysis depends on histidine 41, which acts as the Nucleophile. Intrachain disulfides connect cysteine 45/cysteine 51 and cysteine 47/cysteine 190. Residue aspartate 85 coordinates Mg(2+).

The protein belongs to the arthropod phospholipase D family. Class II subfamily. It depends on Mg(2+) as a cofactor. In terms of tissue distribution, expressed by the venom gland.

It localises to the secreted. The catalysed reaction is an N-(acyl)-sphingosylphosphocholine = an N-(acyl)-sphingosyl-1,3-cyclic phosphate + choline. The enzyme catalyses an N-(acyl)-sphingosylphosphoethanolamine = an N-(acyl)-sphingosyl-1,3-cyclic phosphate + ethanolamine. It carries out the reaction a 1-acyl-sn-glycero-3-phosphocholine = a 1-acyl-sn-glycero-2,3-cyclic phosphate + choline. It catalyses the reaction a 1-acyl-sn-glycero-3-phosphoethanolamine = a 1-acyl-sn-glycero-2,3-cyclic phosphate + ethanolamine. In terms of biological role, dermonecrotic toxins cleave the phosphodiester linkage between the phosphate and headgroup of certain phospholipids (sphingolipid and lysolipid substrates), forming an alcohol (often choline) and a cyclic phosphate. This toxin acts on sphingomyelin (SM). It may also act on ceramide phosphoethanolamine (CPE), lysophosphatidylcholine (LPC) and lysophosphatidylethanolamine (LPE), but not on lysophosphatidylserine (LPS), and lysophosphatidylglycerol (LPG). It acts by transphosphatidylation, releasing exclusively cyclic phosphate products as second products. Induces dermonecrosis, hemolysis, increased vascular permeability, edema, inflammatory response, and platelet aggregation. This is Dermonecrotic toxin LdSicTox-alphaIB3aii from Loxosceles deserta (Desert recluse spider).